A 535-amino-acid polypeptide reads, in one-letter code: Peptide chain release factor 3 (535 aa).

A tr-type G domain is found at 8-276 (ARRRTFAIIS…ALVDLAPQPG (269 aa)). GTP is bound by residues 17-24 (SHPDAGKT), 85-89 (DTPGH), and 139-142 (NKMD).

Belongs to the TRAFAC class translation factor GTPase superfamily. Classic translation factor GTPase family. PrfC subfamily.

The protein localises to the cytoplasm. In terms of biological role, increases the formation of ribosomal termination complexes and stimulates activities of RF-1 and RF-2. It binds guanine nucleotides and has strong preference for UGA stop codons. It may interact directly with the ribosome. The stimulation of RF-1 and RF-2 is significantly reduced by GTP and GDP, but not by GMP. This Bordetella avium (strain 197N) protein is Peptide chain release factor 3.